The primary structure comprises 339 residues: Ketol-acid reductoisomerase (NADP(+)) (339 aa).

Positions 1–182 (MRVYYDCDVN…GGGRSGIMKT (182 aa)) constitute a KARI N-terminal Rossmann domain. NADP(+) is bound by residues 24–27 (YGAQ), Ser-51, Thr-53, and 83–86 (DELQ). His-108 is an active-site residue. Residue Gly-134 coordinates NADP(+). One can recognise a KARI C-terminal knotted domain in the interval 183–328 (TFREECETDL…DKIRSMMALT (146 aa)). Residues Asp-191, Glu-195, Glu-227, and Glu-231 each contribute to the Mg(2+) site. Ser-252 lines the substrate pocket.

It belongs to the ketol-acid reductoisomerase family. Requires Mg(2+) as cofactor.

It carries out the reaction (2R)-2,3-dihydroxy-3-methylbutanoate + NADP(+) = (2S)-2-acetolactate + NADPH + H(+). The enzyme catalyses (2R,3R)-2,3-dihydroxy-3-methylpentanoate + NADP(+) = (S)-2-ethyl-2-hydroxy-3-oxobutanoate + NADPH + H(+). It participates in amino-acid biosynthesis; L-isoleucine biosynthesis; L-isoleucine from 2-oxobutanoate: step 2/4. The protein operates within amino-acid biosynthesis; L-valine biosynthesis; L-valine from pyruvate: step 2/4. In terms of biological role, involved in the biosynthesis of branched-chain amino acids (BCAA). Catalyzes an alkyl-migration followed by a ketol-acid reduction of (S)-2-acetolactate (S2AL) to yield (R)-2,3-dihydroxy-isovalerate. In the isomerase reaction, S2AL is rearranged via a Mg-dependent methyl migration to produce 3-hydroxy-3-methyl-2-ketobutyrate (HMKB). In the reductase reaction, this 2-ketoacid undergoes a metal-dependent reduction by NADPH to yield (R)-2,3-dihydroxy-isovalerate. This Bartonella bacilliformis (strain ATCC 35685 / KC583 / Herrer 020/F12,63) protein is Ketol-acid reductoisomerase (NADP(+)).